The chain runs to 322 residues: MSQLYDITIVGGGPVGLFAAFYAHLRQAKVQIIDSLPQLGGQPAILYPEKEILDVPGFPNLTGEELTNRLIEQLNGFDTPIHLNETVLEIDKQEEEFAITTSKGSHLTKTVIIAMGGGAFKPRPLELEGVEGYENIHYHVSNIQQYAGKKVTILGGGDSAVDWALAFEKIAPTTLVHRRDNFRALEHSVQALQESSVTIKTPFAPSQLLGNGKTLAKLEITKVKSDETETIDLDHLFVNYGFKSSVGNLKNWGLDLNRHKIIVNSKQESSQAGIYAIGDCCYYDGKIDLIATGLGEAPTAVNNAINYIDPEQKVQPKHSTSL.

FAD contacts are provided by Asp34, Gln42, Tyr47, Val87, Phe120, Asp279, and Thr320.

The protein belongs to the ferredoxin--NADP reductase type 2 family. As to quaternary structure, homodimer. FAD is required as a cofactor.

The enzyme catalyses 2 reduced [2Fe-2S]-[ferredoxin] + NADP(+) + H(+) = 2 oxidized [2Fe-2S]-[ferredoxin] + NADPH. The protein is Ferredoxin--NADP reductase of Streptococcus pneumoniae (strain Hungary19A-6).